The following is a 448-amino-acid chain: MRGDTGAIVGVCISHERASVDQLETAAADSERHAVESLLANPAVEEAIALQTCNRTEGYVVVSDHEDGLEALELFTRAVPDDVVVEMGHEESLRHLLRVAAGLESIVLGEDQILGQLRTAYETARGVGGIGPMLEDGVTKAIHVGERARTETKINEGVVSIASAAVRLLKQESSLTDGTALVVGAGEMGQLAAEALSEEVDRLLVANRTVPHAEHIAESVDIDASALALDGIEAAVSEASAVISATGSGDQVFDIGTFSDSGDVSIVDIAQPRDVPAGADRLPSVTVYDLDALESVTAETRNKRQRAAEAVERIVDEEFDRLLTQYKRKRADRVISTMYESAEQVKAAEINSALSAADFDDEQAEVVEAMADAIVSQILAAPTKSLRDAAEEDDWSTIHTALQLFDPDFGGPDQATPPEFTKGMSVEDIPDGMRDEIPNAMLDRLSDD.

Substrate is bound by residues 52–55, Ser-105, 110–112, and Gln-116; these read TCNR and EDQ. The Nucleophile role is filled by Cys-53. NADP(+) is bound at residue 184 to 189; the sequence is GAGEMG. The tract at residues 406-435 is disordered; it reads DPDFGGPDQATPPEFTKGMSVEDIPDGMRD.

It belongs to the glutamyl-tRNA reductase family. As to quaternary structure, homodimer.

It carries out the reaction (S)-4-amino-5-oxopentanoate + tRNA(Glu) + NADP(+) = L-glutamyl-tRNA(Glu) + NADPH + H(+). It functions in the pathway porphyrin-containing compound metabolism; protoporphyrin-IX biosynthesis; 5-aminolevulinate from L-glutamyl-tRNA(Glu): step 1/2. Functionally, catalyzes the NADPH-dependent reduction of glutamyl-tRNA(Glu) to glutamate 1-semialdehyde (GSA). The polypeptide is Glutamyl-tRNA reductase (Haloarcula marismortui (strain ATCC 43049 / DSM 3752 / JCM 8966 / VKM B-1809) (Halobacterium marismortui)).